Consider the following 200-residue polypeptide: 3-isopropylmalate dehydratase small subunit (200 aa).

This sequence belongs to the LeuD family. LeuD type 1 subfamily. As to quaternary structure, heterodimer of LeuC and LeuD.

It catalyses the reaction (2R,3S)-3-isopropylmalate = (2S)-2-isopropylmalate. Its pathway is amino-acid biosynthesis; L-leucine biosynthesis; L-leucine from 3-methyl-2-oxobutanoate: step 2/4. Functionally, catalyzes the isomerization between 2-isopropylmalate and 3-isopropylmalate, via the formation of 2-isopropylmaleate. This Vibrio vulnificus (strain YJ016) protein is 3-isopropylmalate dehydratase small subunit.